Here is a 129-residue protein sequence, read N- to C-terminus: Small ribosomal subunit protein uS11 (129 aa).

The protein belongs to the universal ribosomal protein uS11 family. In terms of assembly, part of the 30S ribosomal subunit. Interacts with proteins S7 and S18. Binds to IF-3.

Its function is as follows. Located on the platform of the 30S subunit, it bridges several disparate RNA helices of the 16S rRNA. Forms part of the Shine-Dalgarno cleft in the 70S ribosome. This is Small ribosomal subunit protein uS11 from Enterobacter sp. (strain 638).